Consider the following 272-residue polypeptide: Shikimate dehydrogenase (NADP(+)) (272 aa).

Residues 14 to 16 (SKS) and threonine 61 contribute to the shikimate site. Catalysis depends on lysine 65, which acts as the Proton acceptor. Residue glutamate 77 coordinates NADP(+). Positions 86 and 102 each coordinate shikimate. NADP(+) is bound by residues 126 to 130 (GAGGA), 149 to 154 (NRTASR), and methionine 213. Tyrosine 215 serves as a coordination point for shikimate. An NADP(+)-binding site is contributed by glycine 237.

Belongs to the shikimate dehydrogenase family. Homodimer.

The enzyme catalyses shikimate + NADP(+) = 3-dehydroshikimate + NADPH + H(+). It participates in metabolic intermediate biosynthesis; chorismate biosynthesis; chorismate from D-erythrose 4-phosphate and phosphoenolpyruvate: step 4/7. Its function is as follows. Involved in the biosynthesis of the chorismate, which leads to the biosynthesis of aromatic amino acids. Catalyzes the reversible NADPH linked reduction of 3-dehydroshikimate (DHSA) to yield shikimate (SA). This is Shikimate dehydrogenase (NADP(+)) from Salmonella typhimurium (strain LT2 / SGSC1412 / ATCC 700720).